Consider the following 189-residue polypeptide: Isopentenyl-diphosphate Delta-isomerase (189 aa).

The Mn(2+) site is built by H27 and H34. The Nudix hydrolase domain occupies 32–171 (PLHFAFSTYI…PFVFSPWLVD (140 aa)). C69 is a catalytic residue. C69 lines the Mg(2+) pocket. H71 is a binding site for Mn(2+). E89 contributes to the Mg(2+) binding site. Mn(2+) contacts are provided by E119 and E121. Residue E121 is part of the active site.

This sequence belongs to the IPP isomerase type 1 family. Mg(2+) is required as a cofactor. Mn(2+) serves as cofactor.

It is found in the cytoplasm. It catalyses the reaction isopentenyl diphosphate = dimethylallyl diphosphate. The protein operates within isoprenoid biosynthesis; dimethylallyl diphosphate biosynthesis; dimethylallyl diphosphate from isopentenyl diphosphate: step 1/1. Its function is as follows. Catalyzes the 1,3-allylic rearrangement of the homoallylic substrate isopentenyl (IPP) to its highly electrophilic allylic isomer, dimethylallyl diphosphate (DMAPP). The sequence is that of Isopentenyl-diphosphate Delta-isomerase from Corynebacterium glutamicum (strain ATCC 13032 / DSM 20300 / JCM 1318 / BCRC 11384 / CCUG 27702 / LMG 3730 / NBRC 12168 / NCIMB 10025 / NRRL B-2784 / 534).